Consider the following 1212-residue polypeptide: DNA-directed RNA polymerase subunit beta' (1212 aa).

Positions 60, 62, 75, and 78 each coordinate Zn(2+). 3 residues coordinate Mg(2+): D450, D452, and D454. C819, C893, C900, and C903 together coordinate Zn(2+).

The protein belongs to the RNA polymerase beta' chain family. As to quaternary structure, the RNAP catalytic core consists of 2 alpha, 1 beta, 1 beta' and 1 omega subunit. When a sigma factor is associated with the core the holoenzyme is formed, which can initiate transcription. Mg(2+) serves as cofactor. The cofactor is Zn(2+).

The enzyme catalyses RNA(n) + a ribonucleoside 5'-triphosphate = RNA(n+1) + diphosphate. Functionally, DNA-dependent RNA polymerase catalyzes the transcription of DNA into RNA using the four ribonucleoside triphosphates as substrates. The polypeptide is DNA-directed RNA polymerase subunit beta' (Streptococcus thermophilus (strain CNRZ 1066)).